The chain runs to 150 residues: MPIVDTGSVAPLSAAEKTKIRSAWAPVYSTYETSGVDILVKFFTSTPAAQEFFPKFKGLTTADQLKKSADVRWHAERIINAVNDAVASMDDTEKMSMKLRDLSGKHAKSFQVDPQYFKVLAAVIADTVAAGDAGFEKLMSMICILLRSAY.

Positions 11–150 (PLSAAEKTKI…MICILLRSAY (140 aa)) constitute a Globin domain. Heme b contacts are provided by His74 and His106.

Belongs to the globin family. As to quaternary structure, monomer at high oxygen tension and high pH and dimeric at low oxygen tension and lower pH.

The protein is Globin-5 of Petromyzon marinus (Sea lamprey).